The chain runs to 1677 residues: Zinc finger protein 831 (1677 aa).

Residues 1–26 are compositionally biased toward pro residues; the sequence is MEVPEPTCPAPPARDQPAPTPGPPGA. The tract at residues 1–43 is disordered; the sequence is MEVPEPTCPAPPARDQPAPTPGPPGAPGGQASPHLTLGPVLLP. C2H2-type zinc fingers lie at residues 144 to 166 and 172 to 196; these read YLCP…IRSH and FPCA…TQTH. Disordered stretches follow at residues 193-250, 270-398, 516-557, 663-931, 950-1062, 1100-1119, 1137-1176, 1216-1243, 1510-1597, and 1620-1677; these read TQTH…SPGA, GSAF…AGLE, WLEP…PSGH, EAAG…VLSA, TPLP…TCEA, NWEL…SGPL, LTRP…PFPS, LRDE…GPAQ, SAES…GQYG, and LITR…VIEI. Basic and acidic residues-rich tracts occupy residues 216 to 232 and 325 to 341; these read EGDK…RGES and KPWD…KCES. Over residues 376–385 the composition is skewed to gly residues; it reads EGGPGPGPGV. The stretch at 391-423 forms a coiled coil; the sequence is GAREAGLELEKKRLEERIAQLISHNQAVVDDAQ. 4 stretches are compositionally biased toward basic and acidic residues: residues 517 to 526, 674 to 684, 707 to 727, and 813 to 834; these read LEPREPRDPW, QDRRTPVHEDI, PTKH…RVEE, and SGED…HSWK. 2 stretches are compositionally biased toward low complexity: residues 880–894 and 905–919; these read LESS…SVAL and PLHP…HPSL. Low complexity predominate over residues 1153 to 1170; it reads SSHSGTSRSHSTRSPHST. Over residues 1518–1531 the composition is skewed to polar residues; that stretch reads QTAGRTLTSSSPDS. Basic and acidic residues predominate over residues 1649–1662; the sequence is RSLEGMRKQTRVEF.

The chain is Zinc finger protein 831 (ZNF831) from Homo sapiens (Human).